The following is a 195-amino-acid chain: Nodulin-20a (195 aa).

A signal peptide spans 1-17; the sequence is MRVVLITLFLFIGAAVA.

This sequence belongs to the nodulin 20 family.

It is found in the symbiosome. Its subcellular location is the peribacteroid membrane. The protein resides in the peribacteroid space. The polypeptide is Nodulin-20a (NOD20A) (Glycine max (Soybean)).